A 402-amino-acid polypeptide reads, in one-letter code: CinA-like protein (402 aa).

The protein belongs to the CinA family.

In Deinococcus deserti (strain DSM 17065 / CIP 109153 / LMG 22923 / VCD115), this protein is CinA-like protein.